The following is a 408-amino-acid chain: Phosphoglycerate kinase (408 aa).

Substrate contacts are provided by residues 24–26, R39, 62–65, R121, and R161; these read DLN and HLGR. Residues K211, G307, E338, and 364 to 367 each bind ATP; that span reads GGDS.

It belongs to the phosphoglycerate kinase family. Monomer.

It localises to the cytoplasm. The catalysed reaction is (2R)-3-phosphoglycerate + ATP = (2R)-3-phospho-glyceroyl phosphate + ADP. Its pathway is carbohydrate degradation; glycolysis; pyruvate from D-glyceraldehyde 3-phosphate: step 2/5. This chain is Phosphoglycerate kinase, found in Arthrobacter sp. (strain FB24).